Consider the following 397-residue polypeptide: Mannonate dehydratase (397 aa).

It belongs to the mannonate dehydratase family. Fe(2+) serves as cofactor. Mn(2+) is required as a cofactor.

It catalyses the reaction D-mannonate = 2-dehydro-3-deoxy-D-gluconate + H2O. It participates in carbohydrate metabolism; pentose and glucuronate interconversion. Functionally, catalyzes the dehydration of D-mannonate. This chain is Mannonate dehydratase, found in Yersinia pestis bv. Antiqua (strain Antiqua).